A 637-amino-acid polypeptide reads, in one-letter code: Pentatricopeptide repeat-containing protein At1g12300, mitochondrial (637 aa).

The transit peptide at 1-95 directs the protein to the mitochondrion; that stretch reads MVKLMIRRLS…PTVIDFSRLF (95 aa). PPR repeat units follow at residues 87 to 121, 122 to 156, 157 to 191, 192 to 226, 227 to 261, 262 to 296, 297 to 331, 332 to 366, 367 to 401, 402 to 436, 437 to 471, 472 to 506, 507 to 541, 542 to 576, and 577 to 611; these read TVID…GIAH, NLYT…GYEP, NTIT…GHKP, DLIT…GCQP, NAVT…NIKL, DAVK…GITT, NIIT…KINP, NVVT…GIAP, DTIT…GCDP, NIRT…GVVA, DTVT…KVPP, NIVT…KMEL, DIGI…GVKP, GVKT…GHAP, and DGWT…GFSV.

This sequence belongs to the PPR family. P subfamily.

Its subcellular location is the mitochondrion. In Arabidopsis thaliana (Mouse-ear cress), this protein is Pentatricopeptide repeat-containing protein At1g12300, mitochondrial.